Consider the following 192-residue polypeptide: Fe/S biogenesis protein NfuA (192 aa).

[4Fe-4S] cluster contacts are provided by cysteine 149 and cysteine 152.

It belongs to the NfuA family. In terms of assembly, homodimer. It depends on [4Fe-4S] cluster as a cofactor.

Functionally, involved in iron-sulfur cluster biogenesis. Binds a 4Fe-4S cluster, can transfer this cluster to apoproteins, and thereby intervenes in the maturation of Fe/S proteins. Could also act as a scaffold/chaperone for damaged Fe/S proteins. The polypeptide is Fe/S biogenesis protein NfuA (Shewanella piezotolerans (strain WP3 / JCM 13877)).